The following is a 58-amino-acid chain: Ribosome biogenesis protein Nop10 (58 aa).

This sequence belongs to the NOP10 family.

Involved in ribosome biogenesis; more specifically in 18S rRNA pseudouridylation and in cleavage of pre-rRNA. The sequence is that of Ribosome biogenesis protein Nop10 from Thermococcus onnurineus (strain NA1).